Here is a 1657-residue protein sequence, read N- to C-terminus: Ras GTPase-activating-like protein IQGAP1 (1657 aa).

S2 bears the N-acetylserine mark. Residue S2 is modified to Phosphoserine. A Calponin-homology (CH) domain is found at 44–159 (LCHLEEAKRW…YCIHALSLYL (116 aa)). Phosphotyrosine is present on Y172. S330 carries the post-translational modification Phosphoserine. A WW domain is found at 679–712 (GDNNSKWVKHWVKGGYYYYHNLETQEGGWDEPPN). IQ domains lie at 745-774 (NEGL…FLKK), 775-804 (QIPA…YLRS), 805-834 (HKDE…YFRD), and 835-864 (HIND…AEDP). The segment at 956–1274 (GGLKALSKEK…FFQTACDVPE (319 aa)) is C1. A Ras-GAP domain is found at 1020 to 1269 (YLLLRLFKTA…QKFRRFFQTA (250 aa)). The tract at residues 1276–1657 (QDKFNVDEYS…FLLNKKFYGK (382 aa)) is C2. Residues 1410–1448 (TPATSEQEAEHQRAMQRRAIRDAKTPDKMKKSKSVKEDS) form a disordered region. Positions 1417 to 1448 (EAEHQRAMQRRAIRDAKTPDKMKKSKSVKEDS) are enriched in basic and acidic residues. Position 1441 is a phosphoserine; by PKC (S1441). S1443 carries the phosphoserine; by PKC/PRKCE modification.

In terms of assembly, interacts with CDC42; the interaction is demonstrated with IQGAP1 in GTP-bound and in nucleotide-free state. Interacts with RAC1. Does not interact with RHOA. Interacts with TSG101. Interacts with PAK6. Interacts with TMEM14B; this interaction increases IQGAP1 phosphorylation and induces its nuclear translocation. Interacts with SASH1. Interacts with PJVK. Interacts with SLC26A4; this interaction enhances the chloride-bicarbonate exchange activity of SLC26A4. Interacts with SVEP1. Interacts with ILK; the interaction is required for localization of IQGAP to the cell cortex. (Microbial infection) Interacts with ebolavirus vp40. As to quaternary structure, (Microbial infection) Interacts with human cytomegalovirus protein UL5. In terms of assembly, (Microbial infection) Interacts with C.jejuni invasion antigen D (CiaD). Phosphorylation of Ser-1443 by PKC/PRKCE prevents interaction between C1 and C2, allowing binding of nucleotide-free CDC42. Ser-1443 phosphorylation enhances the ability to promote neurite outgrowth. As to expression, expressed in the placenta, lung, and kidney. A lower level expression is seen in the heart, liver, skeletal muscle and pancreas.

The protein resides in the cell membrane. The protein localises to the nucleus. It localises to the cytoplasm. Its subcellular location is the cell cortex. It is found in the apical cell membrane. The protein resides in the basolateral cell membrane. In terms of biological role, plays a crucial role in regulating the dynamics and assembly of the actin cytoskeleton. Recruited to the cell cortex by interaction with ILK which allows it to cooperate with its effector DIAPH1 to locally stabilize microtubules and allow stable insertion of caveolae into the plasma membrane. Binds to activated CDC42 but does not stimulate its GTPase activity. Associates with calmodulin. May promote neurite outgrowth. May play a possible role in cell cycle regulation by contributing to cell cycle progression after DNA replication arrest. The protein is Ras GTPase-activating-like protein IQGAP1 (IQGAP1) of Homo sapiens (Human).